The sequence spans 128 residues: Holo-[acyl-carrier-protein] synthase (128 aa).

The Mg(2+) site is built by Asp10 and Glu59.

It belongs to the P-Pant transferase superfamily. AcpS family. Mg(2+) serves as cofactor.

The protein resides in the cytoplasm. The enzyme catalyses apo-[ACP] + CoA = holo-[ACP] + adenosine 3',5'-bisphosphate + H(+). Its function is as follows. Transfers the 4'-phosphopantetheine moiety from coenzyme A to a Ser of acyl-carrier-protein. This chain is Holo-[acyl-carrier-protein] synthase, found in Syntrophotalea carbinolica (strain DSM 2380 / NBRC 103641 / GraBd1) (Pelobacter carbinolicus).